The primary structure comprises 134 residues: MATDRRVARVAELIKREISQMLMSGIKDDRVGSGMVSVTDVDLSGDLQHAKIFVSIYGTEAARAETMAGLKAATGYVRSELGHRVRLRRTPEVVFLEDRSLERGTQVLSLLNRLSEERQKNADLDEMAAEEPES.

Belongs to the RbfA family. In terms of assembly, monomer. Binds 30S ribosomal subunits, but not 50S ribosomal subunits or 70S ribosomes.

The protein resides in the cytoplasm. In terms of biological role, one of several proteins that assist in the late maturation steps of the functional core of the 30S ribosomal subunit. Associates with free 30S ribosomal subunits (but not with 30S subunits that are part of 70S ribosomes or polysomes). Required for efficient processing of 16S rRNA. May interact with the 5'-terminal helix region of 16S rRNA. The polypeptide is Ribosome-binding factor A (Cyanothece sp. (strain PCC 7425 / ATCC 29141)).